Reading from the N-terminus, the 332-residue chain is L-lactate dehydrogenase C chain (332 aa).

Residues 29 to 57 and R99 each bind NAD(+); that span reads GAVGMACAICILLKDLADELALVDVAVDK. 3 residues coordinate substrate: R106, N138, and R169. Position 138 (N138) interacts with NAD(+). H193 (proton acceptor) is an active-site residue. Residue T248 participates in substrate binding. At S301 the chain carries Phosphoserine.

It belongs to the LDH/MDH superfamily. LDH family. As to quaternary structure, homotetramer. Interacts with RABL2/RABL2A; binds preferentially to GTP-bound RABL2.

The protein resides in the cytoplasm. It carries out the reaction (S)-lactate + NAD(+) = pyruvate + NADH + H(+). It functions in the pathway fermentation; pyruvate fermentation to lactate; (S)-lactate from pyruvate: step 1/1. Its function is as follows. Possible role in sperm motility. The chain is L-lactate dehydrogenase C chain (LDHC) from Sus scrofa (Pig).